Reading from the N-terminus, the 245-residue chain is 1-(5-phosphoribosyl)-5-[(5-phosphoribosylamino)methylideneamino] imidazole-4-carboxamide isomerase (245 aa).

Asp8 (proton acceptor) is an active-site residue. Asp129 serves as the catalytic Proton donor.

This sequence belongs to the HisA/HisF family.

The protein resides in the cytoplasm. The enzyme catalyses 1-(5-phospho-beta-D-ribosyl)-5-[(5-phospho-beta-D-ribosylamino)methylideneamino]imidazole-4-carboxamide = 5-[(5-phospho-1-deoxy-D-ribulos-1-ylimino)methylamino]-1-(5-phospho-beta-D-ribosyl)imidazole-4-carboxamide. It participates in amino-acid biosynthesis; L-histidine biosynthesis; L-histidine from 5-phospho-alpha-D-ribose 1-diphosphate: step 4/9. The polypeptide is 1-(5-phosphoribosyl)-5-[(5-phosphoribosylamino)methylideneamino] imidazole-4-carboxamide isomerase (Rhodopseudomonas palustris (strain BisB5)).